The chain runs to 331 residues: Biotin synthase (331 aa).

Positions Y46–R275 constitute a Radical SAM core domain. [4Fe-4S] cluster contacts are provided by C64, C68, and C71. Residues C108, C140, C200, and R270 each contribute to the [2Fe-2S] cluster site.

Belongs to the radical SAM superfamily. Biotin synthase family. As to quaternary structure, homodimer. [4Fe-4S] cluster is required as a cofactor. [2Fe-2S] cluster serves as cofactor.

It carries out the reaction (4R,5S)-dethiobiotin + (sulfur carrier)-SH + 2 reduced [2Fe-2S]-[ferredoxin] + 2 S-adenosyl-L-methionine = (sulfur carrier)-H + biotin + 2 5'-deoxyadenosine + 2 L-methionine + 2 oxidized [2Fe-2S]-[ferredoxin]. The protein operates within cofactor biosynthesis; biotin biosynthesis; biotin from 7,8-diaminononanoate: step 2/2. In terms of biological role, catalyzes the conversion of dethiobiotin (DTB) to biotin by the insertion of a sulfur atom into dethiobiotin via a radical-based mechanism. This chain is Biotin synthase, found in Lysinibacillus sphaericus (strain C3-41).